The sequence spans 439 residues: Glutamyl-tRNA(Gln) amidotransferase subunit D (439 aa).

Residues 88–419 (GKVKIISTGG…EEVKRIMLTN (332 aa)) form the Asparaginase/glutaminase domain. Catalysis depends on residues threonine 98, threonine 174, aspartate 175, and lysine 253.

This sequence belongs to the asparaginase 1 family. GatD subfamily. As to quaternary structure, heterodimer of GatD and GatE.

It catalyses the reaction L-glutamyl-tRNA(Gln) + L-glutamine + ATP + H2O = L-glutaminyl-tRNA(Gln) + L-glutamate + ADP + phosphate + H(+). In terms of biological role, allows the formation of correctly charged Gln-tRNA(Gln) through the transamidation of misacylated Glu-tRNA(Gln) in organisms which lack glutaminyl-tRNA synthetase. The reaction takes place in the presence of glutamine and ATP through an activated gamma-phospho-Glu-tRNA(Gln). The GatDE system is specific for glutamate and does not act on aspartate. This Metallosphaera sedula (strain ATCC 51363 / DSM 5348 / JCM 9185 / NBRC 15509 / TH2) protein is Glutamyl-tRNA(Gln) amidotransferase subunit D.